The primary structure comprises 289 residues: MENEFTYEDYQRTAEWLRSHTKHRPQVAVICGSGLGGLTAKLTQPQAFDYNEIPNFPQSTVQGHAGRLVFGFLNGRSCVMMQGRFHMYEGYSLSKVTFPVRVFHLLGVDTLVVTNAAGGLNPKFEVGDIMLIRDHINLPGFCGQNPLRGPNDERFGVRFPAMSDAYDRDMRQKAFNAWKQMGEQRELQEGTYIMSAGPTFETVAESCLLRMLGADAVGMSTVPEVIVARHCGLRVFGFSLITNKVVMDYNNLEKASHQEVLEAGKAAAQKLEQFVSILMESIPPRERAN.

Methionine 1 bears the N-acetylmethionine mark. Residues serine 33, histidine 64, and 84–86 each bind phosphate; that span reads RFH. Tyrosine 88 contacts a purine D-ribonucleoside. Alanine 116 lines the phosphate pocket. Positions 201 and 219 each coordinate a purine D-ribonucleoside. Phosphate is bound at residue serine 220. 2 residues coordinate a purine D-ribonucleoside: asparagine 243 and histidine 257.

Belongs to the PNP/MTAP phosphorylase family. In terms of assembly, homotrimer.

It localises to the cytoplasm. It catalyses the reaction inosine + phosphate = alpha-D-ribose 1-phosphate + hypoxanthine. The catalysed reaction is guanosine + phosphate = alpha-D-ribose 1-phosphate + guanine. The enzyme catalyses 2'-deoxyguanosine + phosphate = 2-deoxy-alpha-D-ribose 1-phosphate + guanine. It carries out the reaction 2'-deoxyinosine + phosphate = 2-deoxy-alpha-D-ribose 1-phosphate + hypoxanthine. It participates in purine metabolism; purine nucleoside salvage. Its function is as follows. Catalyzes the phosphorolytic breakdown of the N-glycosidic bond in the beta-(deoxy)ribonucleoside molecules, with the formation of the corresponding free purine bases and pentose-1-phosphate. Preferentially acts on 6-oxopurine nucleosides including inosine and guanosine. The chain is Purine nucleoside phosphorylase (Pnp) from Rattus norvegicus (Rat).